Here is a 210-residue protein sequence, read N- to C-terminus: NADH dehydrogenase [ubiquinone] iron-sulfur protein 8, mitochondrial (210 aa).

The N-terminal 34 residues, M1–A34, are a transit peptide targeting the mitochondrion. 4Fe-4S ferredoxin-type domains follow at residues R102–E131 and T141–N170. [4Fe-4S] cluster is bound by residues C111, C114, C117, C121, C150, C153, C156, and C160.

The protein belongs to the complex I 23 kDa subunit family. Core subunit of respiratory chain NADH dehydrogenase (Complex I) which is composed of 45 different subunits. This is a component of the iron-sulfur (IP) fragment of the enzyme. Interacts with RAB5IF. [4Fe-4S] cluster serves as cofactor.

Its subcellular location is the mitochondrion inner membrane. The catalysed reaction is a ubiquinone + NADH + 5 H(+)(in) = a ubiquinol + NAD(+) + 4 H(+)(out). Its function is as follows. Core subunit of the mitochondrial membrane respiratory chain NADH dehydrogenase (Complex I) which catalyzes electron transfer from NADH through the respiratory chain, using ubiquinone as an electron acceptor. Essential for the catalytic activity and assembly of complex I. This is NADH dehydrogenase [ubiquinone] iron-sulfur protein 8, mitochondrial (NDUFS8) from Macaca fascicularis (Crab-eating macaque).